The chain runs to 270 residues: Flavin-dependent thymidylate synthase (270 aa).

Positions 13–218 (GFVRLVDQMG…PLAWAAFEEH (206 aa)) constitute a ThyX domain. Residues serine 59, 82–84 (RHR), and glutamate 90 contribute to the FAD site. DUMP-binding positions include 79–82 (QWFR), 90–94 (EISGR), and arginine 157. The ThyX motif motif lies at 82–92 (RHRTASVNEIS). FAD is bound by residues 173–175 (DLH) and histidine 179. Residue arginine 184 participates in dUMP binding. Catalysis depends on arginine 184, which acts as the Involved in ionization of N3 of dUMP, leading to its activation.

The protein belongs to the thymidylate synthase ThyX family. Homotetramer. It depends on FAD as a cofactor.

The enzyme catalyses dUMP + (6R)-5,10-methylene-5,6,7,8-tetrahydrofolate + NADPH + H(+) = dTMP + (6S)-5,6,7,8-tetrahydrofolate + NADP(+). Its pathway is pyrimidine metabolism; dTTP biosynthesis. In terms of biological role, catalyzes the reductive methylation of 2'-deoxyuridine-5'-monophosphate (dUMP) to 2'-deoxythymidine-5'-monophosphate (dTMP) while utilizing 5,10-methylenetetrahydrofolate (mTHF) as the methyl donor, and NADPH and FADH(2) as the reductant. The polypeptide is Flavin-dependent thymidylate synthase (Thermus thermophilus (strain ATCC BAA-163 / DSM 7039 / HB27)).